The sequence spans 401 residues: Short chain dehydrogenase/reductase dpchH (401 aa).

A glycan (N-linked (GlcNAc...) asparagine) is linked at asparagine 16. The chain crosses the membrane as a helical span at residues 51 to 71; it reads VRAVDVLFGTFLYVPLGILFL. NAD(+) is bound by residues 72–80, 99–100, and 118–120; these read KKSLSGFGD, TG, and AKV. Asparagine 242 carries an N-linked (GlcNAc...) asparagine glycan. The Proton acceptor role is filled by tyrosine 275. NAD(+) contacts are provided by residues 275–279 and 308–310; these read YGTSK and GTI. Asparagine 386 carries N-linked (GlcNAc...) asparagine glycosylation.

Its subcellular location is the membrane. It participates in secondary metabolite biosynthesis; terpenoid biosynthesis. Short chain dehydrogenase/reductase; part of the gene cluster that mediates the biosynthesis of the diterpenoid pyrones higginsianins A and B. The first step of the pathway is the synthesis of the alpha-pyrone moiety by the polyketide synthase dpchA via condensation of one acetyl-CoA starter unit with 3 malonyl-CoA units and 2 methylations. The alpha-pyrone is then combined with geranylgeranyl pyrophosphate (GGPP) formed by the GGPP synthase dpchD through the action of the prenyltransferase dpchC to yield a linear alpha-pyrone diterpenoid. Subsequent steps in the diterpenoid pyrone biosynthetic pathway involve the decalin core formation, which is initiated by the epoxidation of the C10-C11 olefin by the FAD-dependent oxidoreductase dpchE, and is followed by a cyclization cascade catalyzed by the terpene cyclase dpchB. The short chain dehydrogenase/reductase dpchG then oxidizes the 8S hydroxy group to a ketone and the short chain dehydrogenase/reductase dpchH reduces the ketone to the 8R hydroxy group to yield higginsianin B. Finally, the FAD-dependent oxidoreductase dpchF converts higginsianin B into higginsianin A. The sequence is that of Short chain dehydrogenase/reductase dpchH from Colletotrichum higginsianum (strain IMI 349063) (Crucifer anthracnose fungus).